We begin with the raw amino-acid sequence, 177 residues long: Large ribosomal subunit protein uL10 (177 aa).

The protein belongs to the universal ribosomal protein uL10 family. Part of the ribosomal stalk of the 50S ribosomal subunit. The N-terminus interacts with L11 and the large rRNA to form the base of the stalk. The C-terminus forms an elongated spine to which L12 dimers bind in a sequential fashion forming a multimeric L10(L12)X complex.

Its function is as follows. Forms part of the ribosomal stalk, playing a central role in the interaction of the ribosome with GTP-bound translation factors. The protein is Large ribosomal subunit protein uL10 of Xanthomonas campestris pv. campestris (strain 8004).